The primary structure comprises 445 residues: Amino-acid acetyltransferase (445 aa).

Residues 299–438 (EQVRQAQIDD…QGLYNYQRNS (140 aa)) form the N-acetyltransferase domain.

This sequence belongs to the acetyltransferase family. ArgA subfamily.

Its subcellular location is the cytoplasm. The catalysed reaction is L-glutamate + acetyl-CoA = N-acetyl-L-glutamate + CoA + H(+). Its pathway is amino-acid biosynthesis; L-arginine biosynthesis; N(2)-acetyl-L-ornithine from L-glutamate: step 1/4. The chain is Amino-acid acetyltransferase from Vibrio atlanticus (strain LGP32) (Vibrio splendidus (strain Mel32)).